A 68-amino-acid chain; its full sequence is Antimicrobial peptide UyCT5 (68 aa).

A signal peptide spans Met-1–Ala-23. A Leucine amide modification is found at Leu-36. Residues Gly-40–Arg-68 constitute a propeptide that is removed on maturation.

It belongs to the non-disulfide-bridged peptide (NDBP) superfamily. Short antimicrobial peptide (group 4) family. In terms of tissue distribution, expressed by the venom gland.

It localises to the secreted. Its subcellular location is the target cell membrane. In terms of biological role, antimicrobial peptide that inhibits the growth of Gram-positive (S.aureus, MIC=1 uM) and Gram-negative bacteria (E.coli, MIC=15 uM and P.aeruginosa, MIC=2 uM). It also shows 37% of hemolysis when 15 uM are tested (93% at 50 uM). This Urodacus yaschenkoi (Inland robust scorpion) protein is Antimicrobial peptide UyCT5.